Reading from the N-terminus, the 480-residue chain is Protein disulfide-isomerase 5-4 (480 aa).

Residues Asn74 and Asn99 are each glycosylated (N-linked (GlcNAc...) asparagine). The region spanning 120-263 is the Thioredoxin domain; sequence FHAGEVLSLI…LVKMVVSLVE (144 aa). Residues Cys170 and Cys173 each act as nucleophile in the active site. Residues Cys170 and Cys173 are joined by a disulfide bond. N-linked (GlcNAc...) asparagine glycosylation is found at Asn280, Asn326, and Asn376. Residues 439 to 459 form a helical membrane-spanning segment; sequence FSHFITNVCAIIGGVFTVAGI.

Belongs to the protein disulfide isomerase family. In terms of tissue distribution, widely expressed.

It localises to the membrane. Acts as a protein-folding catalyst that interacts with nascent polypeptides to catalyze the formation, isomerization, and reduction or oxidation of disulfide bonds. This chain is Protein disulfide-isomerase 5-4 (PDIL5-4), found in Arabidopsis thaliana (Mouse-ear cress).